Consider the following 248-residue polypeptide: Probable transcriptional regulatory protein RPC_4807 (248 aa).

Residues 1–21 (MAGHSQFKNIMHRKGRQDAQK) form a disordered region.

It belongs to the TACO1 family.

Its subcellular location is the cytoplasm. In Rhodopseudomonas palustris (strain BisB18), this protein is Probable transcriptional regulatory protein RPC_4807.